Here is a 295-residue protein sequence, read N- to C-terminus: ATP synthase subunit a (295 aa).

Transmembrane regions (helical) follow at residues 41-61 (KWSA…WLGF), 101-121 (YLTI…IPVA), 129-149 (IALP…VGIR), 161-181 (LVPA…IEFV), 191-211 (LAIR…VFAL), 222-242 (FVFG…ELMI), and 244-264 (VLQA…AISS).

This sequence belongs to the ATPase A chain family. In terms of assembly, F-type ATPases have 2 components, CF(1) - the catalytic core - and CF(0) - the membrane proton channel. CF(1) has five subunits: alpha(3), beta(3), gamma(1), delta(1), epsilon(1). CF(0) has three main subunits: a(1), b(2) and c(9-12). The alpha and beta chains form an alternating ring which encloses part of the gamma chain. CF(1) is attached to CF(0) by a central stalk formed by the gamma and epsilon chains, while a peripheral stalk is formed by the delta and b chains.

It localises to the cell membrane. Key component of the proton channel; it plays a direct role in the translocation of protons across the membrane. In Parafrankia sp. (strain EAN1pec), this protein is ATP synthase subunit a.